Reading from the N-terminus, the 499-residue chain is Glycerol kinase 2 (499 aa).

Threonine 13 lines the ADP pocket. 3 residues coordinate ATP: threonine 13, threonine 14, and serine 15. A sn-glycerol 3-phosphate-binding site is contributed by threonine 13. ADP is bound at residue arginine 17. Residues arginine 83, glutamate 84, tyrosine 134, and aspartate 241 each contribute to the sn-glycerol 3-phosphate site. Arginine 83, glutamate 84, tyrosine 134, aspartate 241, and glutamine 242 together coordinate glycerol. ADP-binding residues include threonine 263 and glycine 306. ATP contacts are provided by threonine 263, glycine 306, glutamine 310, and glycine 407. Glycine 407 lines the ADP pocket.

It belongs to the FGGY kinase family.

It catalyses the reaction glycerol + ATP = sn-glycerol 3-phosphate + ADP + H(+). It participates in polyol metabolism; glycerol degradation via glycerol kinase pathway; sn-glycerol 3-phosphate from glycerol: step 1/1. Key enzyme in the regulation of glycerol uptake and metabolism. Catalyzes the phosphorylation of glycerol to yield sn-glycerol 3-phosphate. The polypeptide is Glycerol kinase 2 (Saccharolobus solfataricus (strain ATCC 35092 / DSM 1617 / JCM 11322 / P2) (Sulfolobus solfataricus)).